The following is a 189-amino-acid chain: Parkinson disease protein 7 homolog (189 aa).

Alanine 2 bears the N-acetylalanine; in Protein/nucleic acid deglycase DJ-1, N-terminally processed mark. 2 S-palmitoyl cysteine lipidation sites follow: cysteine 46 and cysteine 53. Position 67 is a phosphotyrosine (tyrosine 67). Catalysis depends on cysteine 106, which acts as the Nucleophile. Cysteine 106 carries the cysteine sulfinic acid (-SO2H); alternate modification. Cysteine 106 is lipidated: S-palmitoyl cysteine; alternate. Histidine 126 is a catalytic residue. Lysine 130 is covalently cross-linked (Glycyl lysine isopeptide (Lys-Gly) (interchain with G-Cter in SUMO)). At lysine 148 the chain carries N6-acetyllysine. The residue at position 182 (lysine 182) is an N6-succinyllysine.

The protein belongs to the peptidase C56 family. As to quaternary structure, homodimer. Binds EFCAB6/DJBP and PIAS2. Part of a ternary complex containing PARK7, EFCAB6/DJBP and AR. Interacts (via N-terminus) with OTUD7B. Interacts with BBS1, HIPK1, CLCF1 and MTERF. Forms a complex with PINK1 and PRKN. Interacts (via C-terminus) with NCF1; the interaction is enhanced by LPS and modulates NCF1 phosphorylation and membrane translocation. Interacts with NENF. The cofactor is Deglycase activity does not require glutathione as a cofactor, however, glycated glutathione constitutes a PARK7 substrate.. Sumoylated on Lys-130 by PIAS2 or PIAS4; which is essential for cell-growth promoting activity and transforming activity. Post-translationally, undergoes cleavage of a C-terminal peptide and subsequent activation of protease activity in response to oxidative stress. Detected in liver, heart, spleen and testis (at protein level). Detected in liver, heart, spleen, kidney, epididymidis, vas deferens, sperm cells and testis.

It is found in the cell membrane. The protein resides in the cytoplasm. The protein localises to the nucleus. It localises to the membrane raft. Its subcellular location is the mitochondrion. It is found in the endoplasmic reticulum. The enzyme catalyses N(omega)-(1-hydroxy-2-oxopropyl)-L-arginyl-[protein] + H2O = lactate + L-arginyl-[protein] + H(+). The catalysed reaction is N(6)-(1-hydroxy-2-oxopropyl)-L-lysyl-[protein] + H2O = lactate + L-lysyl-[protein] + H(+). It catalyses the reaction S-(1-hydroxy-2-oxopropyl)-L-cysteinyl-[protein] + H2O = lactate + L-cysteinyl-[protein] + H(+). It carries out the reaction N(omega)-(1-hydroxy-2-oxoethyl)-L-arginyl-[protein] + H2O = L-arginyl-[protein] + glycolate + H(+). The enzyme catalyses N(6)-(1-hydroxy-2-oxoethyl)-L-lysyl-[protein] + H2O = glycolate + L-lysyl-[protein] + H(+). The catalysed reaction is S-(1-hydroxy-2-oxoethyl)-L-cysteinyl-[protein] + H2O = glycolate + L-cysteinyl-[protein] + H(+). It catalyses the reaction N(2)-(1-hydroxy-2-oxopropyl)-dGTP + H2O = lactate + dGTP + H(+). It carries out the reaction N(2)-(1-hydroxy-2-oxopropyl)-GTP + H2O = lactate + GTP + H(+). The enzyme catalyses N(2)-(1-hydroxy-2-oxopropyl)-GDP + H2O = lactate + GDP + H(+). The catalysed reaction is N(2)-(1-hydroxy-2-oxopropyl)-GMP + H2O = lactate + GMP + H(+). It catalyses the reaction N(2)-(1-hydroxy-2-oxoethyl)-dGTP + H2O = dGTP + glycolate + H(+). It carries out the reaction N(2)-(1-hydroxy-2-oxoethyl)-GTP + H2O = glycolate + GTP + H(+). The enzyme catalyses N(2)-(1-hydroxy-2-oxoethyl)-GDP + H2O = glycolate + GDP + H(+). The catalysed reaction is N(2)-(1-hydroxy-2-oxoethyl)-GMP + H2O = glycolate + GMP + H(+). It catalyses the reaction an N(2)-(1-hydroxy-2-oxopropyl)-guanosine in RNA + H2O = a guanosine in RNA + lactate + H(+). It carries out the reaction an N(2)-(1-hydroxy-2-oxopropyl)-2'-deoxyguanosine in DNA + H2O = a 2'-deoxyguanosine in DNA + lactate + H(+). The enzyme catalyses an N(2)-(1-hydroxy-2-oxoethyl)-guanosine in RNA + H2O = a guanosine in RNA + glycolate + H(+). The catalysed reaction is an N(2)-(1-hydroxy-2-oxoethyl)-2'-deoxyguanosine in DNA + H2O = a 2'-deoxyguanosine in DNA + glycolate + H(+). In terms of biological role, multifunctional protein with controversial molecular function which plays an important role in cell protection against oxidative stress and cell death acting as oxidative stress sensor and redox-sensitive chaperone and protease. It is involved in neuroprotective mechanisms like the stabilization of NFE2L2 and PINK1 proteins, male fertility as a positive regulator of androgen signaling pathway as well as cell growth and transformation through, for instance, the modulation of NF-kappa-B signaling pathway. Has been described as a protein and nucleotide deglycase that catalyzes the deglycation of the Maillard adducts formed between amino groups of proteins or nucleotides and reactive carbonyl groups of glyoxals. But this function is rebuted by other works. As a protein deglycase, repairs methylglyoxal- and glyoxal-glycated proteins, and releases repaired proteins and lactate or glycolate, respectively. Deglycates cysteine, arginine and lysine residues in proteins, and thus reactivates these proteins by reversing glycation by glyoxals. Acts on early glycation intermediates (hemithioacetals and aminocarbinols), preventing the formation of advanced glycation endproducts (AGE) that cause irreversible damage. Also functions as a nucleotide deglycase able to repair glycated guanine in the free nucleotide pool (GTP, GDP, GMP, dGTP) and in DNA and RNA. Is thus involved in a major nucleotide repair system named guanine glycation repair (GG repair), dedicated to reversing methylglyoxal and glyoxal damage via nucleotide sanitization and direct nucleic acid repair. Protects histones from adduction by methylglyoxal, controls the levels of methylglyoxal-derived argininine modifications on chromatin. Able to remove the glycations and restore histone 3, histone glycation disrupts both local and global chromatin architecture by altering histone-DNA interactions as well as histone acetylation and ubiquitination levels. Displays a very low glyoxalase activity that may reflect its deglycase activity. Eliminates hydrogen peroxide and protects cells against hydrogen peroxide-induced cell death. Required for correct mitochondrial morphology and function as well as for autophagy of dysfunctional mitochondria. Plays a role in regulating expression or stability of the mitochondrial uncoupling proteins SLC25A14 and SLC25A27 in dopaminergic neurons of the substantia nigra pars compacta and attenuates the oxidative stress induced by calcium entry into the neurons via L-type channels during pacemaking. Regulates astrocyte inflammatory responses, may modulate lipid rafts-dependent endocytosis in astrocytes and neuronal cells. In pancreatic islets, involved in the maintenance of mitochondrial reactive oxygen species (ROS) levels and glucose homeostasis in an age- and diet dependent manner. Protects pancreatic beta cells from cell death induced by inflammatory and cytotoxic setting. Binds to a number of mRNAs containing multiple copies of GG or CC motifs and partially inhibits their translation but dissociates following oxidative stress. Metal-binding protein able to bind copper as well as toxic mercury ions, enhances the cell protection mechanism against induced metal toxicity. In macrophages, interacts with the NADPH oxidase subunit NCF1 to direct NADPH oxidase-dependent ROS production, and protects against sepsis. The polypeptide is Parkinson disease protein 7 homolog (PARK7) (Mesocricetus auratus (Golden hamster)).